The sequence spans 424 residues: Serine--tRNA ligase (424 aa).

232–234 (TAE) lines the L-serine pocket. Residue 263–265 (RSE) coordinates ATP. L-serine is bound at residue E286. 350–353 (EISS) contacts ATP. Residue S385 coordinates L-serine.

It belongs to the class-II aminoacyl-tRNA synthetase family. Type-1 seryl-tRNA synthetase subfamily. In terms of assembly, homodimer. The tRNA molecule binds across the dimer.

The protein resides in the cytoplasm. The catalysed reaction is tRNA(Ser) + L-serine + ATP = L-seryl-tRNA(Ser) + AMP + diphosphate + H(+). It catalyses the reaction tRNA(Sec) + L-serine + ATP = L-seryl-tRNA(Sec) + AMP + diphosphate + H(+). The protein operates within aminoacyl-tRNA biosynthesis; selenocysteinyl-tRNA(Sec) biosynthesis; L-seryl-tRNA(Sec) from L-serine and tRNA(Sec): step 1/1. Its function is as follows. Catalyzes the attachment of serine to tRNA(Ser). Is also able to aminoacylate tRNA(Sec) with serine, to form the misacylated tRNA L-seryl-tRNA(Sec), which will be further converted into selenocysteinyl-tRNA(Sec). This is Serine--tRNA ligase from Latilactobacillus sakei subsp. sakei (strain 23K) (Lactobacillus sakei subsp. sakei).